Here is a 180-residue protein sequence, read N- to C-terminus: Acireductone dioxygenase (180 aa).

Fe(2+)-binding residues include H97, H99, E103, and H141. Ni(2+)-binding residues include H97, H99, E103, and H141.

Belongs to the acireductone dioxygenase (ARD) family. Monomer. The cofactor is Fe(2+). Ni(2+) serves as cofactor.

The catalysed reaction is 1,2-dihydroxy-5-(methylsulfanyl)pent-1-en-3-one + O2 = 3-(methylsulfanyl)propanoate + CO + formate + 2 H(+). It catalyses the reaction 1,2-dihydroxy-5-(methylsulfanyl)pent-1-en-3-one + O2 = 4-methylsulfanyl-2-oxobutanoate + formate + 2 H(+). It participates in amino-acid biosynthesis; L-methionine biosynthesis via salvage pathway; L-methionine from S-methyl-5-thio-alpha-D-ribose 1-phosphate: step 5/6. Functionally, catalyzes 2 different reactions between oxygen and the acireductone 1,2-dihydroxy-3-keto-5-methylthiopentene (DHK-MTPene) depending upon the metal bound in the active site. Fe-containing acireductone dioxygenase (Fe-ARD) produces formate and 2-keto-4-methylthiobutyrate (KMTB), the alpha-ketoacid precursor of methionine in the methionine recycle pathway. Ni-containing acireductone dioxygenase (Ni-ARD) produces methylthiopropionate, carbon monoxide and formate, and does not lie on the methionine recycle pathway. The chain is Acireductone dioxygenase from Serratia proteamaculans (strain 568).